We begin with the raw amino-acid sequence, 276 residues long: NADPH-dependent 7-cyano-7-deazaguanine reductase (276 aa).

A substrate-binding site is contributed by 83–85; sequence IES. 85–86 is an NADPH binding site; that stretch reads SK. The active-site Thioimide intermediate is the Cys184. Asp191 serves as the catalytic Proton donor. 223–224 contributes to the substrate binding site; sequence HE. 252-253 contributes to the NADPH binding site; sequence RG.

This sequence belongs to the GTP cyclohydrolase I family. QueF type 2 subfamily. In terms of assembly, homodimer.

The protein resides in the cytoplasm. The enzyme catalyses 7-aminomethyl-7-carbaguanine + 2 NADP(+) = 7-cyano-7-deazaguanine + 2 NADPH + 3 H(+). It functions in the pathway tRNA modification; tRNA-queuosine biosynthesis. Functionally, catalyzes the NADPH-dependent reduction of 7-cyano-7-deazaguanine (preQ0) to 7-aminomethyl-7-deazaguanine (preQ1). The protein is NADPH-dependent 7-cyano-7-deazaguanine reductase of Desulfotalea psychrophila (strain LSv54 / DSM 12343).